Here is a 1733-residue protein sequence, read N- to C-terminus: Gag-Pol polyprotein (1733 aa).

Glycine 2 is lipidated: N-myristoyl glycine; by host. Residues 108 to 121 (LPTAPVLPPGPSAQ) show a composition bias toward pro residues. Disordered stretches follow at residues 108–218 (LPTA…LRMG), 449–469 (KEERRRAEDEQRERERDRRRH), and 511–550 (WAKDCPKKPRGPRGPRPQTSLLTLGDXGGQGQEPPPEPRI). The PTAP/PSAP motif motif lies at 109-112 (PTAP). Residues 128 to 132 (LYPAL) carry the LYPX(n)L motif motif. A PPXY motif motif is present at residues 161–164 (PPPY). The residue at position 190 (serine 190) is a Phosphoserine; by host. Residues 436-476 (EEREERIRREIEEKEERRRAEDEQRERERDRRRHREMSKLL) are a coiled coil. A compositionally biased stretch (basic and acidic residues) spans 449–464 (KEERRRAEDEQRERER). The segment at 500–517 (DQCAYCKEKGHWAKDCPK) adopts a CCHC-type zinc-finger fold. Positions 526 to 535 (RPQTSLLTLG) are enriched in low complexity. Residues 559 to 629 (VTFLVDTGAQ…CPYPLLGRDL (71 aa)) form the Peptidase A2 domain. Residue aspartate 564 is the Protease; shared with dimeric partner of the active site. RNA is bound by residues tyrosine 721, aspartate 771, arginine 773, and proline 787. In terms of domain architecture, Reverse transcriptase spans 739 to 930 (LDQGILVPCQ…KQVKYLGYLL (192 aa)). Residue aspartate 807 participates in Mg(2+) binding. RNA is bound by residues asparagine 851 and proline 853. Aspartate 881 and aspartate 882 together coordinate Mg(2+). The DNA site is built by arginine 941, arginine 955, arginine 958, and phenylalanine 966. Positions 1054 and 1055 each coordinate RNA. Tryptophan 1063 serves as a coordination point for DNA. RNA is bound at residue lysine 1082. DNA is bound at residue arginine 1113. Positions 1172–1318 (PDADYTWYTD…ADQAAREAAM (147 aa)) constitute an RNase H type-1 domain. Aspartate 1181 contributes to the Mg(2+) binding site. RNA contacts are provided by serine 1184 and leucine 1186. Residues glutamine 1187, serine 1214, and glutamine 1216 each coordinate DNA. Positions 1219 and 1240 each coordinate Mg(2+). RNA-binding residues include arginine 1242 and arginine 1266. 3 residues coordinate Mg(2+): aspartate 1310, aspartate 1453, and aspartate 1512. An Integrase catalytic domain is found at 1442 to 1600 (RGHRPGTHWE…TPYEILYGAP (159 aa)).

Homohexamer. Further associates as homomultimer. The virus core is composed of a lattice formed from hexagonal rings, each containing six capsid monomers. In terms of assembly, homodimer. The protease is a homodimer, whose active site consists of two apposed aspartic acid residues. The reverse transcriptase is a monomer. It depends on Mg(2+) as a cofactor. The cofactor is Mn(2+). Specific enzymatic cleavages by the viral protease yield mature proteins. The protease is released by autocatalytic cleavage. The polyprotein is cleaved during and after budding, this process is termed maturation. In terms of processing, sumoylated. Required for virus replication. Post-translationally, phosphorylated on serine residues.

Its subcellular location is the host cell membrane. It localises to the virion. The catalysed reaction is DNA(n) + a 2'-deoxyribonucleoside 5'-triphosphate = DNA(n+1) + diphosphate. It carries out the reaction Endonucleolytic cleavage to 5'-phosphomonoester.. Its function is as follows. Plays a role in budding and is processed by the viral protease during virion maturation outside the cell. During budding, it recruits, in a PPXY-dependent or independent manner, Nedd4-like ubiquitin ligases that conjugate ubiquitin molecules to Gag, or to Gag binding host factors. Interaction with HECT ubiquitin ligases probably link the viral protein to the host ESCRT pathway and facilitate release. Targets Gag and gag-pol polyproteins to the plasma membrane via a multipartite membrane binding signal, that includes its myristoylated N-terminus. Also mediates nuclear localization of the pre-integration complex. In terms of biological role, forms the spherical core of the virion that encapsulates the genomic RNA-nucleocapsid complex. Functionally, involved in the packaging and encapsidation of two copies of the genome. Binds with high affinity to conserved UCUG elements within the packaging signal, located near the 5'-end of the genome. This binding is dependent on genome dimerization. Its function is as follows. The aspartyl protease mediates proteolytic cleavages of Gag and Gag-Pol polyproteins during or shortly after the release of the virion from the plasma membrane. Cleavages take place as an ordered, step-wise cascade to yield mature proteins. This process is called maturation. Displays maximal activity during the budding process just prior to particle release from the cell. Multifunctional enzyme that converts the viral dimeric RNA genome into dsDNA in the cytoplasm, shortly after virus entry into the cell. This enzyme displays a DNA polymerase activity that can copy either DNA or RNA templates, and a ribonuclease H (RNase H) activity that cleaves the RNA strand of RNA-DNA heteroduplexes in a partially processive 3' to 5' endonucleasic mode. Conversion of viral genomic RNA into dsDNA requires many steps. A tRNA binds to the primer-binding site (PBS) situated at the 5' end of the viral RNA. RT uses the 3' end of the tRNA primer to perform a short round of RNA-dependent minus-strand DNA synthesis. The reading proceeds through the U5 region and ends after the repeated (R) region which is present at both ends of viral RNA. The portion of the RNA-DNA heteroduplex is digested by the RNase H, resulting in a ssDNA product attached to the tRNA primer. This ssDNA/tRNA hybridizes with the identical R region situated at the 3' end of viral RNA. This template exchange, known as minus-strand DNA strong stop transfer, can be either intra- or intermolecular. RT uses the 3' end of this newly synthesized short ssDNA to perform the RNA-dependent minus-strand DNA synthesis of the whole template. RNase H digests the RNA template except for a polypurine tract (PPT) situated at the 5' end of the genome. It is not clear if both polymerase and RNase H activities are simultaneous. RNase H probably can proceed both in a polymerase-dependent (RNA cut into small fragments by the same RT performing DNA synthesis) and a polymerase-independent mode (cleavage of remaining RNA fragments by free RTs). Secondly, RT performs DNA-directed plus-strand DNA synthesis using the PPT that has not been removed by RNase H as primers. PPT and tRNA primers are then removed by RNase H. The 3' and 5' ssDNA PBS regions hybridize to form a circular dsDNA intermediate. Strand displacement synthesis by RT to the PBS and PPT ends produces a blunt ended, linear dsDNA copy of the viral genome that includes long terminal repeats (LTRs) at both ends. In terms of biological role, catalyzes viral DNA integration into the host chromosome, by performing a series of DNA cutting and joining reactions. This enzyme activity takes place after virion entry into a cell and reverse transcription of the RNA genome in dsDNA. The first step in the integration process is 3' processing. This step requires a complex comprising the viral genome, matrix protein and integrase. This complex is called the pre-integration complex (PIC). The integrase protein removes 2 nucleotides from each 3' end of the viral DNA, leaving recessed CA OH's at the 3' ends. In the second step that requires cell division, the PIC enters cell nucleus. In the third step, termed strand transfer, the integrase protein joins the previously processed 3' ends to the 5' ends of strands of target cellular DNA at the site of integration. The last step is viral DNA integration into host chromosome. This chain is Gag-Pol polyprotein (gag-pol), found in Homo sapiens (Human).